Consider the following 77-residue polypeptide: Acyl carrier protein (77 aa).

Residues 2–77 form the Carrier domain; the sequence is SNIEERVKKI…AAIDYVSKNQ (76 aa). Ser37 is subject to O-(pantetheine 4'-phosphoryl)serine.

Belongs to the acyl carrier protein (ACP) family. In terms of processing, 4'-phosphopantetheine is transferred from CoA to a specific serine of apo-ACP by AcpS. This modification is essential for activity because fatty acids are bound in thioester linkage to the sulfhydryl of the prosthetic group.

The protein localises to the cytoplasm. The protein operates within lipid metabolism; fatty acid biosynthesis. In terms of biological role, carrier of the growing fatty acid chain in fatty acid biosynthesis. In Shewanella oneidensis (strain ATCC 700550 / JCM 31522 / CIP 106686 / LMG 19005 / NCIMB 14063 / MR-1), this protein is Acyl carrier protein.